We begin with the raw amino-acid sequence, 142 residues long: Transcriptional regulator MraZ (142 aa).

2 consecutive SpoVT-AbrB domains span residues 5 to 51 and 77 to 120; these read ASAL…PRPE and AMDV…DAQT.

It belongs to the MraZ family. Forms oligomers.

The protein localises to the cytoplasm. Its subcellular location is the nucleoid. In Paraburkholderia phytofirmans (strain DSM 17436 / LMG 22146 / PsJN) (Burkholderia phytofirmans), this protein is Transcriptional regulator MraZ.